Here is a 593-residue protein sequence, read N- to C-terminus: ATPase family AAA domain-containing protein 3-A (593 aa).

Residues 1–64 (MSWLFGLNKG…AKAARELDQS (64 aa)) form a disordered region. The Mitochondrial intermembrane portion of the chain corresponds to 1-242 (MSWLFGLNKG…FRTFISDWDK (242 aa)). Positions 15–27 (PGVPGFPEPPSPP) are enriched in pro residues. Basic and acidic residues-rich tracts occupy residues 33 to 44 (GGDKNKPKDKWS) and 53 to 64 (RAAKAARELDQS). A coiled-coil region spans residues 52 to 215 (ERAAKAAREL…QIRLKAAEHR (164 aa)). A helical membrane pass occupies residues 243–260 (VTATVAGLTLLAVGVYTA). Residues 261-593 (KNATGVAGRY…LQPLLEGTQV (333 aa)) lie on the Mitochondrial matrix side of the membrane. ATP is bound at residue 348 to 355 (GPPGTGKT).

The protein belongs to the AAA ATPase family. As to quaternary structure, can form homooligomers. Homodimer formation at the N-terminus may be regulated by ATP and is required for the interaction with the inner surface of the mitochondrial outer membrane and correct mitochondrial homeostasis.

It is found in the mitochondrion inner membrane. It localises to the mitochondrion matrix. Its subcellular location is the mitochondrion nucleoid. It catalyses the reaction ATP + H2O = ADP + phosphate + H(+). Its function is as follows. Essential for mitochondrial network organization, mitochondrial metabolism and cell growth at organism and cellular level. May play an important role in mitochondrial protein synthesis. May also participate in mitochondrial DNA replication. May bind to mitochondrial DNA D-loops and contribute to nucleoid stability. Required for enhanced channeling of cholesterol for hormone-dependent steroidogenesis. Involved in mitochondrial-mediated antiviral innate immunity. Required to protect mitochondria from the PERK-mediated unfolded protein response: specifically inhibits the activity of EIF2AK3/PERK at mitochondria-endoplasmic reticulum contact sites, thereby providing a safe haven for mitochondrial protein translation during endoplasmic reticulum stress. Ability to inhibit EIF2AK3/PERK is independent of its ATPase activity. Also involved in the mitochondrial DNA damage response by promoting signaling between damaged genomes and the mitochondrial membrane, leading to activation of the integrated stress response (ISR). The protein is ATPase family AAA domain-containing protein 3-A (atad3-a) of Xenopus laevis (African clawed frog).